The following is a 326-amino-acid chain: Protein TMED8 (326 aa).

The tract at residues 1–99 (MSDRQAAEGP…EGQAPGEQAA (99 aa)) is disordered. Over residues 50–65 (SSPLASASDPAAESSP) the composition is skewed to low complexity. The region spanning 160-324 (PPCVWTFAKV…NKTLYFHIYY (165 aa)) is the GOLD domain. At lysine 170 the chain carries N6-acetyllysine. Residues 234–268 (VQVSDSSEDEEEEEDEEEEIEEPVPVGDVERGSRS) are disordered. A compositionally biased stretch (acidic residues) spans 239–255 (SSEDEEEEEDEEEEIEE).

The protein is Protein TMED8 (Tmed8) of Mus musculus (Mouse).